The chain runs to 228 residues: Sec-independent protein translocase protein TatB (228 aa).

A helical membrane pass occupies residues 1–21; that stretch reads MFDFGLGELVFVGIIALIVLG. Disordered stretches follow at residues 126-162 and 196-228; these read LSDG…AETD and VPHT…VRKS. Positions 206-228 are enriched in basic residues; the sequence is AISRKRGLRPKHRAKPKLRVRKS.

This sequence belongs to the TatB family. As to quaternary structure, the Tat system comprises two distinct complexes: a TatABC complex, containing multiple copies of TatA, TatB and TatC subunits, and a separate TatA complex, containing only TatA subunits. Substrates initially bind to the TatABC complex, which probably triggers association of the separate TatA complex to form the active translocon.

The protein localises to the cell inner membrane. In terms of biological role, part of the twin-arginine translocation (Tat) system that transports large folded proteins containing a characteristic twin-arginine motif in their signal peptide across membranes. Together with TatC, TatB is part of a receptor directly interacting with Tat signal peptides. TatB may form an oligomeric binding site that transiently accommodates folded Tat precursor proteins before their translocation. The chain is Sec-independent protein translocase protein TatB from Neisseria meningitidis serogroup C / serotype 2a (strain ATCC 700532 / DSM 15464 / FAM18).